A 184-amino-acid polypeptide reads, in one-letter code: Pyridoxal 5'-phosphate synthase subunit PdxT (184 aa).

46–48 (GES) is a binding site for L-glutamine. Cys-75 (nucleophile) is an active-site residue. L-glutamine contacts are provided by residues Arg-101 and 129–130 (IR). Catalysis depends on charge relay system residues His-165 and Glu-167.

This sequence belongs to the glutaminase PdxT/SNO family. As to quaternary structure, in the presence of PdxS, forms a dodecamer of heterodimers. Only shows activity in the heterodimer.

The enzyme catalyses aldehydo-D-ribose 5-phosphate + D-glyceraldehyde 3-phosphate + L-glutamine = pyridoxal 5'-phosphate + L-glutamate + phosphate + 3 H2O + H(+). The catalysed reaction is L-glutamine + H2O = L-glutamate + NH4(+). Its pathway is cofactor biosynthesis; pyridoxal 5'-phosphate biosynthesis. Its function is as follows. Catalyzes the hydrolysis of glutamine to glutamate and ammonia as part of the biosynthesis of pyridoxal 5'-phosphate. The resulting ammonia molecule is channeled to the active site of PdxS. The sequence is that of Pyridoxal 5'-phosphate synthase subunit PdxT from Staphylococcus haemolyticus (strain JCSC1435).